The primary structure comprises 374 residues: Putative glutamate--cysteine ligase 2 (374 aa).

This sequence belongs to the glutamate--cysteine ligase type 2 family. YbdK subfamily.

It catalyses the reaction L-cysteine + L-glutamate + ATP = gamma-L-glutamyl-L-cysteine + ADP + phosphate + H(+). Functionally, ATP-dependent carboxylate-amine ligase which exhibits weak glutamate--cysteine ligase activity. In Acidovorax sp. (strain JS42), this protein is Putative glutamate--cysteine ligase 2.